Here is a 1742-residue protein sequence, read N- to C-terminus: Kinase non-catalytic C-lobe domain-containing protein 1 (1742 aa).

A KIND 1 domain is found at 37 to 217 (VSLADILSLR…QELSENTWRG (181 aa)). 2 disordered regions span residues 215 to 288 (WRGR…EGLA) and 365 to 455 (FKTQ…TEQS). S267 is modified (phosphoserine). Residues 403–412 (LEASSPSQGS) show a composition bias toward polar residues. Over residues 426–445 (DSDHEGHIPRSEEKIPEESR) the composition is skewed to basic and acidic residues. A KIND 2 domain is found at 456-620 (LSLKDLLSKL…RASTCKVHPE (165 aa)). 4 disordered regions span residues 703-727 (DQLA…REGT), 744-876 (SNQL…KMTA), 948-1006 (GPAS…LSDI), and 1028-1076 (VTRE…ASDF). Over residues 711-727 (SNEKPKEGSGHLDREGT) the composition is skewed to basic and acidic residues. Over residues 755 to 771 (GATPDPDGDSGSPSSAT) the composition is skewed to low complexity. The span at 782–791 (VTQQKGTSGT) shows a compositional bias: polar residues. Over residues 847 to 861 (SDGHPEKPRPADRKL) the composition is skewed to basic and acidic residues. Low complexity predominate over residues 949–965 (PASPSESTSEEPGSQPE). A Phosphoserine modification is found at S951. Polar residues predominate over residues 1043-1053 (GPSQDSTSHAS). Residues 1112 to 1177 (HTELEAQSPE…EMKSKVQFLS (66 aa)) are a coiled coil. The region spanning 1239–1367 (KARILQAGTP…ALLEVGTERR (129 aa)) is the N-terminal Ras-GEF domain. Residues 1461-1712 (STNQLFTQLT…SGADVSILAA (252 aa)) form the Ras-GEF domain.

In terms of assembly, interacts (via KIND2) with MAP2; the interaction enhances MAP2 phosphorylation and localizes KNDC1 to dendrites. As to expression, highly expressed in the brain and at low levels in the ovary. In the brain it is most prominently expressed in the cerebellum where it is restricted to the granular Purkinje cell layer.

It is found in the cell projection. Its subcellular location is the dendrite. The protein resides in the perikaryon. In terms of biological role, RAS-Guanine nucleotide exchange factor (GEF) that controls the negative regulation of neuronal dendrite growth by mediating a signaling pathway linking RAS and MAP2. May be involved in cellular senescence. The polypeptide is Kinase non-catalytic C-lobe domain-containing protein 1 (Mus musculus (Mouse)).